Here is a 226-residue protein sequence, read N- to C-terminus: Phosphoribosylformylglycinamidine synthase subunit PurQ (226 aa).

Positions 4–226 (RIGVVTFPGS…TSILKKLVNA (223 aa)) constitute a Glutamine amidotransferase type-1 domain. Residue Cys87 is the Nucleophile of the active site. Active-site residues include His196 and Glu198.

As to quaternary structure, part of the FGAM synthase complex composed of 1 PurL, 1 PurQ and 2 PurS subunits.

The protein resides in the cytoplasm. It catalyses the reaction N(2)-formyl-N(1)-(5-phospho-beta-D-ribosyl)glycinamide + L-glutamine + ATP + H2O = 2-formamido-N(1)-(5-O-phospho-beta-D-ribosyl)acetamidine + L-glutamate + ADP + phosphate + H(+). The catalysed reaction is L-glutamine + H2O = L-glutamate + NH4(+). The protein operates within purine metabolism; IMP biosynthesis via de novo pathway; 5-amino-1-(5-phospho-D-ribosyl)imidazole from N(2)-formyl-N(1)-(5-phospho-D-ribosyl)glycinamide: step 1/2. Functionally, part of the phosphoribosylformylglycinamidine synthase complex involved in the purines biosynthetic pathway. Catalyzes the ATP-dependent conversion of formylglycinamide ribonucleotide (FGAR) and glutamine to yield formylglycinamidine ribonucleotide (FGAM) and glutamate. The FGAM synthase complex is composed of three subunits. PurQ produces an ammonia molecule by converting glutamine to glutamate. PurL transfers the ammonia molecule to FGAR to form FGAM in an ATP-dependent manner. PurS interacts with PurQ and PurL and is thought to assist in the transfer of the ammonia molecule from PurQ to PurL. This chain is Phosphoribosylformylglycinamidine synthase subunit PurQ, found in Streptomyces coelicolor (strain ATCC BAA-471 / A3(2) / M145).